We begin with the raw amino-acid sequence, 80 residues long: Toxin Acra1 (80 aa).

The first 22 residues, 1 to 22 (MMKLVLFSIIVILFSLIGSIHG), serve as a signal peptide directing secretion. Residues 25–80 (VPGNYPLDSSGNKYPCTVLGDNQSCIDVCKKHGVKYGYCYSFKCWCEFLEDKNVSI) enclose the LCN-type CS-alpha/beta domain. 3 cysteine pairs are disulfide-bonded: C40–C63, C49–C68, and C53–C70.

Expressed by the venom gland.

It is found in the secreted. In terms of biological role, probable neurotoxin that inhibits ion channels. Is toxic to mice. Is about 2.8% of the total protein in the venom. The chain is Toxin Acra1 from Androctonus crassicauda (Arabian fat-tailed scorpion).